Consider the following 337-residue polypeptide: Glyceraldehyde-3-phosphate dehydrogenase (337 aa).

NAD(+)-binding positions include arginine 13 to isoleucine 14, aspartate 35, and lysine 80. Residues serine 151–threonine 153, threonine 182, threonine 211–glycine 212, and arginine 234 each bind D-glyceraldehyde 3-phosphate. The active-site Nucleophile is cysteine 152. Asparagine 316 provides a ligand contact to NAD(+).

The protein belongs to the glyceraldehyde-3-phosphate dehydrogenase family. Homotetramer.

It is found in the cytoplasm. The catalysed reaction is D-glyceraldehyde 3-phosphate + phosphate + NAD(+) = (2R)-3-phospho-glyceroyl phosphate + NADH + H(+). It functions in the pathway carbohydrate degradation; glycolysis; pyruvate from D-glyceraldehyde 3-phosphate: step 1/5. The chain is Glyceraldehyde-3-phosphate dehydrogenase (GAPD) from Mycosarcoma maydis (Corn smut fungus).